The chain runs to 372 residues: Aminomethyltransferase (372 aa).

The protein belongs to the GcvT family. In terms of assembly, the glycine cleavage system is composed of four proteins: P, T, L and H.

The catalysed reaction is N(6)-[(R)-S(8)-aminomethyldihydrolipoyl]-L-lysyl-[protein] + (6S)-5,6,7,8-tetrahydrofolate = N(6)-[(R)-dihydrolipoyl]-L-lysyl-[protein] + (6R)-5,10-methylene-5,6,7,8-tetrahydrofolate + NH4(+). Functionally, the glycine cleavage system catalyzes the degradation of glycine. This is Aminomethyltransferase from Prochlorococcus marinus (strain NATL2A).